An 87-amino-acid chain; its full sequence is Small ribosomal subunit protein uS17 (87 aa).

It belongs to the universal ribosomal protein uS17 family. Part of the 30S ribosomal subunit.

In terms of biological role, one of the primary rRNA binding proteins, it binds specifically to the 5'-end of 16S ribosomal RNA. The sequence is that of Small ribosomal subunit protein uS17 from Geobacillus thermodenitrificans (strain NG80-2).